The primary structure comprises 550 residues: Tyrosine-protein phosphatase 1 (550 aa).

The region spanning 260-539 (LYQKFLRLQS…KYVYDLIDSL (280 aa)) is the Tyrosine-protein phosphatase domain. Phosphoserine is present on residues Ser318 and Ser320. Residue Cys470 is the Phosphocysteine intermediate of the active site.

This sequence belongs to the protein-tyrosine phosphatase family. Non-receptor class subfamily.

The protein localises to the cytoplasm. It catalyses the reaction O-phospho-L-tyrosyl-[protein] + H2O = L-tyrosyl-[protein] + phosphate. Functionally, plays a role in inhibiting the onset of mitosis. Dephosphorylates sty1/spc1 and wis1/spc2/sty2. The protein is Tyrosine-protein phosphatase 1 (pyp1) of Schizosaccharomyces pombe (strain 972 / ATCC 24843) (Fission yeast).